The primary structure comprises 142 residues: Hemoglobin subunit alpha-A (142 aa).

The Globin domain occupies 2 to 142 (VLSAADKTNV…VGAVLTAKYR (141 aa)). H59 is an O2 binding site. H88 lines the heme b pocket.

It belongs to the globin family. In terms of assembly, heterotetramer of two alpha chains and two beta chains. As to expression, red blood cells.

Functionally, involved in oxygen transport from the lung to the various peripheral tissues. The polypeptide is Hemoglobin subunit alpha-A (HBAA) (Anas platyrhynchos platyrhynchos (Northern mallard)).